The chain runs to 721 residues: bZIP transcription factor 17 (721 aa).

Disordered regions lie at residues 1–51 (MAEP…LMSD) and 87–232 (QEQF…EKKR). Topologically, residues 1–366 (MAEPITKEQP…KSEAKTKKVA (366 aa)) are cytoplasmic. A compositionally biased stretch (pro residues) spans 9 to 25 (QPPPPAPDPNSTYPPPS). The segment covering 125-141 (ESPRDSDDRCSGADHNL) has biased composition (basic and acidic residues). Residues 146–170 (PLSSQGSGNCGSDVSEATNESSPKS) show a composition bias toward polar residues. Basic and acidic residues predominate over residues 204–216 (DESRNSKYRRSGE). The bZIP domain maps to 228-288 (DEKKRARLMR…AENATLRQQL (61 aa)). The tract at residues 230–261 (KKRARLMRNRESAQLSRQRKKHYVEELEEKVR) is basic motif. Positions 267-274 (ITDLNGKI) are leucine-zipper. The segment at 337–359 (PRLKPQNTLGTSKAKKSESKKSE) is disordered. The helical transmembrane segment at 367–387 (SISFLGLLFCLFLFGALAPIV) threads the bilayer. The Lumenal portion of the chain corresponds to 388–721 (NVNYGGISGA…RSGAPHLVTT (334 aa)). A compositionally biased stretch (polar residues) spans 422–436 (TSRSGAGTGVSNSNG). Positions 422-462 (TSRSGAGTGVSNSNGMHRGRDSDRGARKNISATESSVTPGN) are disordered. 4 N-linked (GlcNAc...) asparagine glycosylation sites follow: asparagine 450, asparagine 462, asparagine 609, and asparagine 617. The span at 451–462 (ISATESSVTPGN) shows a compositional bias: polar residues. The RRIL cleavage motif motif lies at 627 to 630 (RRIL). 2 N-linked (GlcNAc...) asparagine glycosylation sites follow: asparagine 643 and asparagine 651.

This sequence belongs to the bZIP family. As to quaternary structure, interacts with BZIP28.

It localises to the endoplasmic reticulum membrane. It is found in the golgi apparatus membrane. The protein localises to the nucleus. Transcriptional activator involved in salt and osmotic stress responses. Functions as a stress sensor and transducer in a signaling pathway that resembles an ER stress response. Following salt stress, BZIP17 is cleaved by SBT6.1 (S1P) and S2P at the C-terminus and the N-terminal bZIP component is translocated to the nucleus, where it activates the expression of salt stress response genes. Functions as a stress sensor and transducer in ER stress signaling pathway. ER stress induces proteolysis of BZIP17 by SBT6.1 (S1P) and S2P, and the N-terminal bZIP component is translocated to the nucleus, where it activates the expression and production of ER chaperones, as well as protein involved in brassinosteroid (BR) signaling, which is required for stress acclimation and growth. This chain is bZIP transcription factor 17, found in Arabidopsis thaliana (Mouse-ear cress).